The chain runs to 101 residues: MAKKSKIAKNEQRKVIVERYAAKRAELKKTLVDENASPEAREEARLGLQKLPRDASPIRVRNRDQIDGRPRGTFQRFGISRVRFRDMAHRGELPGIYKSSW.

This sequence belongs to the universal ribosomal protein uS14 family. In terms of assembly, part of the 30S ribosomal subunit. Contacts proteins S3 and S10.

Its function is as follows. Binds 16S rRNA, required for the assembly of 30S particles and may also be responsible for determining the conformation of the 16S rRNA at the A site. The polypeptide is Small ribosomal subunit protein uS14 (Kocuria rhizophila (strain ATCC 9341 / DSM 348 / NBRC 103217 / DC2201)).